The primary structure comprises 252 residues: Fatty acid elongase 4 (252 aa).

The helical transmembrane segment at 25 to 45 (LVSWHALVLGHLLYLFVVFVM) threads the bilayer. N-linked (GlcNAc...) asparagine glycosylation occurs at Asn56. Residues 60–80 (VLVVYNVLQICLSAAMAINLS) form a helical membrane-spanning segment. N-linked (GlcNAc...) asparagine glycosylation is present at Asn89. Transmembrane regions (helical) follow at residues 100-120 (FWMF…VFIL), 127-147 (QLSF…GILL), 150-170 (GLAN…HFLM), 187-207 (FLLT…AILV), and 214-234 (FTLG…VLFL). The HxxHH motif motif lies at 132–136 (HVYHH). His135 serves as the catalytic Nucleophile.

Belongs to the ELO family.

It is found in the membrane. The enzyme catalyses (5Z,8Z,11Z,14Z)-eicosatetraenoyl-CoA + malonyl-CoA + H(+) = (7Z,10Z,13Z,16Z)-3-oxodocosatetraenoyl-CoA + CO2 + CoA. The protein operates within lipid metabolism; fatty acid biosynthesis. Functionally, involved in the synthesis of fatty acids. Elongates arachidonate and other C20 polyunsaturated fatty acids (PUFAs) with a preference for n-6 PUFAs. Not involved in fatty acid synthesis up to C18. This chain is Fatty acid elongase 4, found in Trypanosoma brucei brucei (strain 927/4 GUTat10.1).